The sequence spans 32 residues: Alpha-conotoxin RgIA (32 aa).

The propeptide occupies 1-19; the sequence is SNKRKNAAMLDMIAQHAIR. 2 disulfides stabilise this stretch: C21–C27 and C22–C31.

It belongs to the conotoxin A superfamily. The disulfide bond CysI-CysIII is important for alpha-9-alpha-10 subtype inhibition, whereas the bond CysII-CysIV contributes to GABA(B) modulation. In terms of tissue distribution, expressed by the venom duct.

It is found in the secreted. Its function is as follows. This toxin target two types of receptors, the nicotinic acetylcholine receptor (nAChR) and the G-protein-coupled receptor GABA(B). It specifically inhibits the alpha-9-alpha-10/CHRNA9-CHRNA10 nAChR, with preference for rat receptors. It interacts with the alpha-10(+)/alpha-9(-)interface of the receptor. It shows a two order of magnitude species difference potency for the rat versus human alpha-9-alpha-10 nAChR, due to the Thr-86 located in the alpha-9 nAChR subunit. This toxin also shows inhibition of high voltage-activated (HVA) calcium channels (Cav2.2) by acting on GABA(B) receptors (GABBR1 and GABBR2). In vivo, this toxin produces an acute antinociceptive effect in peripheral nerve-injured rats, which may be related to the inhibition of immune cell buildup at the site of nerve injury. In addition, when intramuscularly injected into rats following chronic constriction injury of the sciatic nerve, this toxin protects peripheral nervous tissues as well as prevents central maladaptive plasticity by inhibiting glial cell activation. The polypeptide is Alpha-conotoxin RgIA (Conus regius (Crown cone)).